The sequence spans 489 residues: FK506-binding protein 4 (489 aa).

2 disordered regions span residues 40-157 (PDET…GLEL) and 199-378 (GNYV…TTGT). Over residues 66-88 (MDIDESDDDYEEDSEEDSDDEEI) the composition is skewed to acidic residues. The segment covering 93–109 (SDKEKARKLKEAAALKE) has biased composition (basic and acidic residues). Acidic residues-rich tracts occupy residues 110–125 (LEDE…DDEN), 143–157 (TDDD…GLEL), and 208–250 (GPSE…DELD). Composition is skewed to basic and acidic residues over residues 267-282 (APKL…RTAD), 292-303 (MMAKDGKAKGAD), and 328-353 (EQKK…EAKK). Residues 362–378 (QGPTPSGQKPGETTTGT) are compositionally biased toward polar residues. The region spanning 406–489 (VAMRYIGKLE…IFDVKLLEIK (84 aa)) is the PPIase FKBP-type domain.

This sequence belongs to the FKBP-type PPIase family. FKBP3/4 subfamily. Binds to histones H3 and H4.

It localises to the nucleus. It carries out the reaction [protein]-peptidylproline (omega=180) = [protein]-peptidylproline (omega=0). With respect to regulation, inhibited by both FK506 and rapamycin. In terms of biological role, PPIase that acts as a histone chaperone. Histone proline isomerase that increases the rate of cis-trans isomerization at prolines on the histone H3 N-terminal tail. Proline isomerization influences H3 methylation thereby regulating gene expression. This chain is FK506-binding protein 4 (fpr4), found in Aspergillus fumigatus (strain ATCC MYA-4609 / CBS 101355 / FGSC A1100 / Af293) (Neosartorya fumigata).